Here is a 186-residue protein sequence, read N- to C-terminus: Adenylate kinase (186 aa).

14–19 (GAGKGT) contacts ATP. The NMP stretch occupies residues 34–63 (STGDILRDHVARGTPLGERVRPIMERGDLV). AMP contacts are provided by residues Thr-35, Arg-40, 61 to 63 (DLV), 84 to 87 (GFPR), and Gln-91. The LID stretch occupies residues 125-135 (RRAELEGRSDD). Arg-126 contributes to the ATP binding site. AMP is bound by residues Arg-132 and Arg-143. Gly-171 serves as a coordination point for ATP.

It belongs to the adenylate kinase family. As to quaternary structure, monomer.

Its subcellular location is the cytoplasm. It catalyses the reaction AMP + ATP = 2 ADP. Its pathway is purine metabolism; AMP biosynthesis via salvage pathway; AMP from ADP: step 1/1. Catalyzes the reversible transfer of the terminal phosphate group between ATP and AMP. Plays an important role in cellular energy homeostasis and in adenine nucleotide metabolism. The sequence is that of Adenylate kinase from Thermus thermophilus (strain ATCC BAA-163 / DSM 7039 / HB27).